A 626-amino-acid polypeptide reads, in one-letter code: DNA mismatch repair protein MutL (626 aa).

Belongs to the DNA mismatch repair MutL/HexB family.

Its function is as follows. This protein is involved in the repair of mismatches in DNA. It is required for dam-dependent methyl-directed DNA mismatch repair. May act as a 'molecular matchmaker', a protein that promotes the formation of a stable complex between two or more DNA-binding proteins in an ATP-dependent manner without itself being part of a final effector complex. The chain is DNA mismatch repair protein MutL from Cellvibrio japonicus (strain Ueda107) (Pseudomonas fluorescens subsp. cellulosa).